The sequence spans 94 residues: DNA-directed RNA polymerase subunit omega (94 aa).

It belongs to the RNA polymerase subunit omega family. As to quaternary structure, the RNAP catalytic core consists of 2 alpha, 1 beta, 1 beta' and 1 omega subunit. When a sigma factor is associated with the core the holoenzyme is formed, which can initiate transcription.

It carries out the reaction RNA(n) + a ribonucleoside 5'-triphosphate = RNA(n+1) + diphosphate. Promotes RNA polymerase assembly. Latches the N- and C-terminal regions of the beta' subunit thereby facilitating its interaction with the beta and alpha subunits. The polypeptide is DNA-directed RNA polymerase subunit omega (Photobacterium profundum (strain SS9)).